We begin with the raw amino-acid sequence, 187 residues long: MSTTFDKDQENEQQQQDAQAIWKKILSPGARITKDDVDFAIDNLESAPDVPYEFMYATFSPNAKIYQPTAIAVSGVGGIIGALLALKRALQYGGPKYYVTTEEVIKATDQKSPLYLANYALNRLLKAYPAQVVVIKPDDFDKIKTLLSSGGVYISGLPYETLIPISQLSGFGRIWHYSPIQKKFFVF.

A helical transmembrane segment spans residues 65–85 (IYQPTAIAVSGVGGIIGALLA).

The protein localises to the host membrane. It is found in the virion. This chain is Structural protein ORF187, found in Acidianus two-tailed virus (ATV).